Here is a 194-residue protein sequence, read N- to C-terminus: MMEVDLLYFEKKYHNCIVAGIDEAGRGPLAGPVVASAVIIDNANIITGIKDSKKLSKKTRELLYEQITSNYVWATAIISHTEIDDINILEATKKACSIAVANLSLEPEIVLVDGNMQFKDERFVSIINGDNLSLSIAAASIVAKVTRDRLMLDLSAELPQYLWHKNSGYGTKEHIEAINIHGLSPYHRRSFRCC.

The 179-residue stretch at Cys-16–Cys-194 folds into the RNase H type-2 domain. A divalent metal cation is bound by residues Asp-22, Glu-23, and Asp-113.

The protein belongs to the RNase HII family. It depends on Mn(2+) as a cofactor. Requires Mg(2+) as cofactor.

It is found in the cytoplasm. It catalyses the reaction Endonucleolytic cleavage to 5'-phosphomonoester.. Endonuclease that specifically degrades the RNA of RNA-DNA hybrids. In Rickettsia massiliae (strain Mtu5), this protein is Ribonuclease HII.